The chain runs to 108 residues: Translation initiation factor 1A (108 aa).

In terms of domain architecture, S1-like spans 11–85; sequence SVKEVPKPAE…NKCDIIYKYS (75 aa).

It belongs to the eIF-1A family.

Its function is as follows. Seems to be required for maximal rate of protein biosynthesis. Enhances ribosome dissociation into subunits and stabilizes the binding of the initiator Met-tRNA(I) to 40 S ribosomal subunits. The sequence is that of Translation initiation factor 1A (eIF1A) from Sulfurisphaera tokodaii (strain DSM 16993 / JCM 10545 / NBRC 100140 / 7) (Sulfolobus tokodaii).